The primary structure comprises 585 residues: Putative ABC transporter ATP-binding protein MG187 (585 aa).

The region spanning 8 to 468 (IELKNIVVDF…PANEFVARFL (461 aa)) is the ABC transporter domain. Position 40–47 (40–47 (GPSGCGKT)) interacts with ATP.

The protein belongs to the ABC transporter superfamily.

In Mycoplasma genitalium (strain ATCC 33530 / DSM 19775 / NCTC 10195 / G37) (Mycoplasmoides genitalium), this protein is Putative ABC transporter ATP-binding protein MG187.